Reading from the N-terminus, the 104-residue chain is Cell division protein FtsL (104 aa).

Residues 1-20 lie on the Cytoplasmic side of the membrane; the sequence is MSKPSLTLPRIVLHDLWQHK. A helical transmembrane segment spans residues 21–43; sequence WILLLALLVLSNAVAVVYTSHVS. Over 44 to 104 the chain is Periplasmic; sequence RKLTTEWDQL…PSEEIVVKVP (61 aa).

This sequence belongs to the FtsL family. As to quaternary structure, part of a complex composed of FtsB, FtsL and FtsQ.

It is found in the cell inner membrane. Its function is as follows. Essential cell division protein. May link together the upstream cell division proteins, which are predominantly cytoplasmic, with the downstream cell division proteins, which are predominantly periplasmic. In Shewanella oneidensis (strain ATCC 700550 / JCM 31522 / CIP 106686 / LMG 19005 / NCIMB 14063 / MR-1), this protein is Cell division protein FtsL.